We begin with the raw amino-acid sequence, 988 residues long: Voltage-gated delayed rectifier potassium channel KCNH5 (988 aa).

The Cytoplasmic segment spans residues 1–217 (MPGGKRGLVA…LHYCAFKTTW (217 aa)). Residues 14-86 (TFLENIVRRS…TIEKVRQTFD (73 aa)) enclose the PAS domain. The region spanning 91–143 (NCFEVLLYKKNRTPVWFYMQIAPIRNEHEKVVLFLCTFKDITLFKQPIEDDST) is the PAC domain. A helical membrane pass occupies residues 218-238 (DWVILILTFYTAIMVPYNVSF). Over 239–243 (KTKQN) the chain is Extracellular. A helical membrane pass occupies residues 244-264 (NIAWLVLDSVVDVIFLVDIVL). Topologically, residues 265–291 (NFHTTFVGPGGEVISDPKLIRMNYLKT) are cytoplasmic. The chain crosses the membrane as a helical span at residues 292 to 312 (WFVIDLLSCLPYDIINAFENV). Over 313–319 (DEGISSL) the chain is Extracellular. Residues 320 to 340 (FSSLKVVRLLRLGRVARKLDH) form a helical; Voltage-sensor membrane-spanning segment. Topologically, residues 341–346 (YLEYGA) are cytoplasmic. Residues 347–367 (AVLVLLVCVFGLVAHWLACIW) form a helical membrane-spanning segment. Residues 368–419 (YSIGDYEVIDEVTNTIQIDSWLYQLALSIGTPYRYNTSAGIWEGGPSKDSLY) are Extracellular-facing. Asn403 carries N-linked (GlcNAc...) asparagine glycosylation. The pore-forming intramembrane region spans 420–440 (VSSLYFTMTSLTTIGFGNIAP). Residues 432 to 437 (TIGFGN) carry the Selectivity filter motif. The Extracellular portion of the chain corresponds to 441-446 (TTDVEK). A helical membrane pass occupies residues 447–467 (MFSVAMMMVGSLLYATIFGNV). At 468–988 (TTIFQQMYAN…PESDKDEINF (521 aa)) the chain is on the cytoplasmic side. 550-668 (AFRLASDGCL…SFSRNLTLTC (119 aa)) contacts a nucleoside 3',5'-cyclic phosphate. The interval 704–715 (HPVRKLFQKFKQ) is calmodulin-binding. The disordered stretch occupies residues 721 to 741 (IQGSAQSDPERSQLQVESRPL). The span at 723–741 (GSAQSDPERSQLQVESRPL) shows a compositional bias: polar residues. Residue Lys785 forms a Glycyl lysine isopeptide (Lys-Gly) (interchain with G-Cter in ubiquitin) linkage. The interval 838–893 (GLLSEDPKGSDSENSVTKNPLRKTDSCDSGITKSDLRLDKAGEARSPLEHSPSQAD) is disordered. The segment covering 871 to 885 (SDLRLDKAGEARSPL) has biased composition (basic and acidic residues). Ser883 is modified (phosphoserine). The segment at 909–948 (TLQEVKHELKEDIQLLSCRMTALEKQVAEILKLLSEKSVP) is CAD (involved in subunit assembly).

It belongs to the potassium channel family. H (Eag) (TC 1.A.1.20) subfamily. Kv10.2/KCNH5 sub-subfamily. As to quaternary structure, homotetramer. The potassium channel is probably composed of a homo- or heterotetrameric complex of pore-forming alpha subunits that can associate with modulating beta subunits. Heteromultimer with KCNH1/EAG.

It is found in the membrane. The enzyme catalyses K(+)(in) = K(+)(out). Functionally, pore-forming (alpha) subunit of a voltage-gated delayed rectifier potassium channel that mediates outward-rectifying potassium currents which, on depolarization, reaches a steady-state level and do not inactivate. The kinetic is characterized by a slow activation time course and a small voltage dependence of the activation time constants, therefore, starts to open at more negative voltages. The activation kinetics depend on the prepulse potential and external divalent cation concentration. The time course of activation is biphasic with a fast and a slowly activating current component. With negative prepulses, the current activation is delayed and slowed down several fold, whereas more positive prepulses speed up activation, therefore the activation rate depends on holding potential. The chain is Voltage-gated delayed rectifier potassium channel KCNH5 from Mus musculus (Mouse).